The sequence spans 328 residues: tRNA uridine(34) hydroxylase (328 aa).

A Rhodanese domain is found at 130 to 224 (LDEDTVVLDT…YGKDPEVQGE (95 aa)). The Cysteine persulfide intermediate role is filled by C184.

Belongs to the TrhO family.

It carries out the reaction uridine(34) in tRNA + AH2 + O2 = 5-hydroxyuridine(34) in tRNA + A + H2O. In terms of biological role, catalyzes oxygen-dependent 5-hydroxyuridine (ho5U) modification at position 34 in tRNAs. In Streptococcus agalactiae serotype Ia (strain ATCC 27591 / A909 / CDC SS700), this protein is tRNA uridine(34) hydroxylase.